The following is a 965-amino-acid chain: Aminopeptidase N (965 aa).

Residues 2 to 8 (AKGFYIS) are Cytoplasmic-facing. The chain crosses the membrane as a helical; Signal-anchor for type II membrane protein span at residues 9–32 (KTLGILGILLGVAAVCTIIALSVV). The segment at 33–68 (YAQEKNRNAENSAIAPTLPGSTSATTSTTNPAIDES) is cytosolic Ser/Thr-rich junction. Over 33–965 (YAQEKNRNAE…VVLKWFTENS (933 aa)) the chain is Extracellular. Positions 44–68 (SAIAPTLPGSTSATTSTTNPAIDES) are disordered. Positions 47 to 64 (APTLPGSTSATTSTTNPA) are enriched in low complexity. The tract at residues 69-965 (KPWNQYRLPK…VVLKWFTENS (897 aa)) is metalloprotease. N-linked (GlcNAc...) asparagine glycans are attached at residues asparagine 114 and asparagine 128. Tyrosine 176 carries the sulfotyrosine modification. N-linked (GlcNAc...) asparagine glycosylation is found at asparagine 234, asparagine 242, and asparagine 264. 351 to 355 (GAMEN) serves as a coordination point for substrate. Zn(2+) is bound at residue histidine 387. Catalysis depends on glutamate 388, which acts as the Proton acceptor. Histidine 391 and glutamate 410 together coordinate Zn(2+). Residues asparagine 555, asparagine 606, and asparagine 624 are each glycosylated (N-linked (GlcNAc...) asparagine). Cysteine 760 and cysteine 767 form a disulfide bridge. N-linked (GlcNAc...) asparagine glycosylation occurs at asparagine 780. The cysteines at positions 797 and 833 are disulfide-linked. Tyrosine 852 carries the phosphotyrosine modification.

This sequence belongs to the peptidase M1 family. As to quaternary structure, homodimer. Interacts with SLC6A19. It depends on Zn(2+) as a cofactor. Post-translationally, sulfated. In terms of processing, N- and O-glycosylated. May undergo proteolysis and give rise to a soluble form. As to expression, widely distributed throughout the CNS. Particularly abundant in kidney and intestinal microvilli, also detected in lung and liver. Weakly expressed in heart and aorta.

It is found in the cell membrane. It catalyses the reaction Release of an N-terminal amino acid, Xaa-|-Yaa- from a peptide, amide or arylamide. Xaa is preferably Ala, but may be most amino acids including Pro (slow action). When a terminal hydrophobic residue is followed by a prolyl residue, the two may be released as an intact Xaa-Pro dipeptide.. Its function is as follows. Broad specificity aminopeptidase which plays a role in the final digestion of peptides generated from hydrolysis of proteins by gastric and pancreatic proteases. Also involved in the processing of various peptides including peptide hormones, such as angiotensin III and IV, neuropeptides, and chemokines. May also be involved the cleavage of peptides bound to major histocompatibility complex class II molecules of antigen presenting cells. May have a role in angiogenesis and promote cholesterol crystallization. May have a role in amino acid transport by acting as binding partner of amino acid transporter SLC6A19 and regulating its activity. The sequence is that of Aminopeptidase N (Anpep) from Rattus norvegicus (Rat).